The sequence spans 192 residues: Fe/S biogenesis protein NfuA (192 aa).

Positions 149 and 152 each coordinate [4Fe-4S] cluster.

It belongs to the NfuA family. As to quaternary structure, homodimer. It depends on [4Fe-4S] cluster as a cofactor.

Functionally, involved in iron-sulfur cluster biogenesis. Binds a 4Fe-4S cluster, can transfer this cluster to apoproteins, and thereby intervenes in the maturation of Fe/S proteins. Could also act as a scaffold/chaperone for damaged Fe/S proteins. The chain is Fe/S biogenesis protein NfuA from Shewanella pealeana (strain ATCC 700345 / ANG-SQ1).